We begin with the raw amino-acid sequence, 506 residues long: Histidine ammonia-lyase (506 aa).

The segment at residues 144 to 146 (ASG) is a cross-link (5-imidazolinone (Ala-Gly)). 2,3-didehydroalanine (Ser) is present on serine 145.

The protein belongs to the PAL/histidase family. In terms of processing, contains an active site 4-methylidene-imidazol-5-one (MIO), which is formed autocatalytically by cyclization and dehydration of residues Ala-Ser-Gly.

It is found in the cytoplasm. The catalysed reaction is L-histidine = trans-urocanate + NH4(+). It participates in amino-acid degradation; L-histidine degradation into L-glutamate; N-formimidoyl-L-glutamate from L-histidine: step 1/3. This is Histidine ammonia-lyase from Legionella pneumophila (strain Paris).